Consider the following 55-residue polypeptide: Large ribosomal subunit protein bL33 (55 aa).

It belongs to the bacterial ribosomal protein bL33 family.

The polypeptide is Large ribosomal subunit protein bL33 (Mesorhizobium japonicum (strain LMG 29417 / CECT 9101 / MAFF 303099) (Mesorhizobium loti (strain MAFF 303099))).